The primary structure comprises 162 residues: Toluate 1,2-dioxygenase subunit beta (162 aa).

It belongs to the bacterial ring-hydroxylating dioxygenase beta subunit family. As to quaternary structure, this dioxygenase system consists of three proteins: the two subunits of the hydroxylase component (XylX and XylY), and an electron transfer component (XylZ).

The protein operates within xenobiotic degradation; toluene degradation. The sequence is that of Toluate 1,2-dioxygenase subunit beta (xylY) from Pseudomonas putida (Arthrobacter siderocapsulatus).